The following is an 874-amino-acid chain: MLAREIREKFLKFFESKGHKILPSASLIPANDPSLLWTAAGMVPFKPYFTGAAVPEVRRVTTCQKCLRTPDIESVGRTARHHTFFEMLGNFSFGDYFKKEAITWAWEFVTEHLGISKDKLYITIYLDDDEAFDIWHNVVGVPAERITRLGKDTNFWEIGVGPCGPCSEIYVDLGPEKGCGSPDCGVACDCGRFLEIWNLVFIQFFRDEQGNYTPLEQKGIDTGMGLERVASVLQGVPSNFDTDIFREIMDYAAQILGVKYGYDEKVDVALKVIADHTRAITFAITDGALPSNEGRGYVIRRLLRRALRFGRLLDREEPFLHLVAAKVIEQMGDVYPELREKAEHTLKIIKLEEEKFRETLNQGLSMLAELMERLTQEGKKEIPGHLAFKLYDTYGFPIELTKEIAEEKGFTVDEEGFKQQMEEQRRRAREAREDVDYLSTRDAFLKQLKEELGEVTFVGYEKLSESTEIIAIIKNGQKVESLAAEEEGEIITRVTPFYPEGGGQVADKGEILGDGFKLSVLDVEKPLSDFILHKVKVVEGSVKVGDKATLMVDETTRMSTARNHTATHLLHKALKMVLGEHVNQAGSLVTPERLRFDFTHFEGVSDEDLRKIENIVNEAILRNLLVQIDYTTLDEARKAGVIALFDEKYGDLVRVVKIGEFSAELCGGTHVSSTGVIGFFKILGESSIGAGVRRIEALTGLGALEYVRSLEDTLQKATEPYKCTFAELPEKISNTLKTLKEKDREIEALMQKIASIEVKSLLNSVREIKGVKVLSAIIDGADMEGLRKAYDVVKASLANYVVLLAGVKDGKVNFLAGVDKNLTDKYHAGELVKEAAKIAGGGGGGRPDMAQAGGKNPEKVKEALQVIDAYVQSK.

Zn(2+)-binding residues include histidine 564, histidine 568, cysteine 666, and histidine 670.

The protein belongs to the class-II aminoacyl-tRNA synthetase family. Zn(2+) serves as cofactor.

Its subcellular location is the cytoplasm. It catalyses the reaction tRNA(Ala) + L-alanine + ATP = L-alanyl-tRNA(Ala) + AMP + diphosphate. Catalyzes the attachment of alanine to tRNA(Ala) in a two-step reaction: alanine is first activated by ATP to form Ala-AMP and then transferred to the acceptor end of tRNA(Ala). Also edits incorrectly charged Ser-tRNA(Ala) and Gly-tRNA(Ala) via its editing domain. This chain is Alanine--tRNA ligase, found in Carboxydothermus hydrogenoformans (strain ATCC BAA-161 / DSM 6008 / Z-2901).